Consider the following 518-residue polypeptide: Filamentous growth regulator 15 (518 aa).

The segment covering 1-41 has biased composition (polar residues); sequence MESTLSVSDEKLTNSSTALNNCGDNKESSQVLTTANTTTDN. Disordered stretches follow at residues 1 to 63, 75 to 101, and 261 to 307; these read MEST…SKER, VDPN…DHGK, and KSRS…KQHR. The span at 42-52 shows a compositional bias: low complexity; that stretch reads QQVQPKSQHQQ. The segment covering 77–95 has biased composition (polar residues); sequence PNQQSKNTVSDSVQDTTGV. Basic residues predominate over residues 262–274; sequence SRSRSKVTKKRKV. Low complexity predominate over residues 283–298; that stretch reads SNTATATTSVTTPDAN. The C2H2-type zinc finger occupies 374–406; the sequence is HECQLPSAEEPHKLCLRRFSRKYELIRHQETVH. Positions 492–518 are disordered; it reads RKSSGDDTNYMETSDLESGEEEVTFNK. A compositionally biased stretch (acidic residues) spans 505-518; it reads SDLESGEEEVTFNK.

Its subcellular location is the nucleus. Its function is as follows. Probable transcription factor involved in the regulation of filamentous growth. This is Filamentous growth regulator 15 (FGR15) from Candida albicans (strain SC5314 / ATCC MYA-2876) (Yeast).